The sequence spans 185 residues: Threonylcarbamoyl-AMP synthase (185 aa).

The region spanning 4 to 185 (SWRVQQAAQD…IATGQVMRAG (182 aa)) is the YrdC-like domain.

It belongs to the SUA5 family. TsaC subfamily.

The protein localises to the cytoplasm. It catalyses the reaction L-threonine + hydrogencarbonate + ATP = L-threonylcarbamoyladenylate + diphosphate + H2O. Its function is as follows. Required for the formation of a threonylcarbamoyl group on adenosine at position 37 (t(6)A37) in tRNAs that read codons beginning with adenine. Catalyzes the conversion of L-threonine, HCO(3)(-)/CO(2) and ATP to give threonylcarbamoyl-AMP (TC-AMP) as the acyladenylate intermediate, with the release of diphosphate. The polypeptide is Threonylcarbamoyl-AMP synthase (Pseudomonas savastanoi pv. phaseolicola (strain 1448A / Race 6) (Pseudomonas syringae pv. phaseolicola (strain 1448A / Race 6))).